Reading from the N-terminus, the 451-residue chain is POU domain, class 3, transcription factor 1 (451 aa).

Disordered stretches follow at residues 1-21, 69-114, 127-154, 186-253, and 395-451; these read MATT…GTGP, AHPQ…GFHA, AWAQ…HQPQ, GLHH…PSSD, and KRMT…GSVQ. 3 stretches are compositionally biased toward gly residues: residues 11–20, 76–85, and 95–112; these read GPGGGAGGTG, TGGGGGGDWA, and AGGG…GGGF. Over residues 190–199 the composition is skewed to basic and acidic residues; sequence ALHEDGHEAQ. Low complexity predominate over residues 220 to 232; that stretch reads AGGLHAAAAHLHP. Residues 247 to 321 form the POU-specific domain; the sequence is EDAPSSDDLE…LLNKWLEETD (75 aa). Positions 339-398 form a DNA-binding region, homeobox; sequence KRKKRTSIEVGVKGALESHFLKCPKPSAHEITGLADSLQLEKEVVRVWFCNRRQKEKRMT. Residues 427–436 show a composition bias toward pro residues; it reads PSAPPPPPPA.

It belongs to the POU transcription factor family. Class-3 subfamily. In terms of tissue distribution, expressed in embryonal stem cells and in the developing brain.

The protein localises to the nucleus. Its function is as follows. Transcription factor that binds to the octamer motif (5'-ATTTGCAT-3'). Acts as a transcriptional activator when binding cooperatively with SOX4, SOX11, or SOX12 to gene promoters. Acts as a transcriptional repressor of myelin-specific genes. This Homo sapiens (Human) protein is POU domain, class 3, transcription factor 1 (POU3F1).